Here is a 172-residue protein sequence, read N- to C-terminus: Adenine phosphoribosyltransferase (172 aa).

The protein belongs to the purine/pyrimidine phosphoribosyltransferase family. In terms of assembly, homodimer.

The protein localises to the cytoplasm. It catalyses the reaction AMP + diphosphate = 5-phospho-alpha-D-ribose 1-diphosphate + adenine. Its pathway is purine metabolism; AMP biosynthesis via salvage pathway; AMP from adenine: step 1/1. In terms of biological role, catalyzes a salvage reaction resulting in the formation of AMP, that is energically less costly than de novo synthesis. The polypeptide is Adenine phosphoribosyltransferase (Clostridium acetobutylicum (strain ATCC 824 / DSM 792 / JCM 1419 / IAM 19013 / LMG 5710 / NBRC 13948 / NRRL B-527 / VKM B-1787 / 2291 / W)).